Consider the following 85-residue polypeptide: MSDLPDQTPKDDSVLFEANGVDPRLLEILICPATRQPLAYDRARHELVSKNARLAYPIRGGIPIMLEEEARDLDDTEGTAGGGEA.

Belongs to the UPF0434 family.

This is UPF0434 protein HNE_3545 from Hyphomonas neptunium (strain ATCC 15444).